The sequence spans 441 residues: MAAHFSGALQLTNLDDFITPSQECIKPVKIEKKPGAKGLAKIKIESDGSYVQLSEDGGKSKLQKAEITLNDCLACSGCITTAESVLITQQSQDELFKILDSNRKLVKEGKGDVQKLVVISISPQSRASIAAKFNLTINDAAKKLSAFFKQLGVHYVFDTTFARDFSLAESQREFVRRFRAYQQGDEGCTPMLASACPGWMCYAEKTHGDYILPYISSTKSPQQIMGSLVKDHLASVVGKSPDSVYHVCVMPCFDKKLEASRDDFYNDMYSTRDVDCVISTVEVETMIQDHCPDFNSIDPVELDKLYCSSDSGDFFGHSGGGSGGFLEHIFKYASRELFDEKVDVLTYKTLRNKDFREVTLQVDGKDVLKFAAAYGFRNIQNLVQKLKRGKSPYHFVEVMACPSGLKFLAQDLFGPTFYPTLEPRSLEKNVQQKNGVSCIFI.

[4Fe-4S] cluster contacts are provided by C24, C72, C75, C78, C196, C252, and C401.

Belongs to the NARF family.

Functionally, component of the cytosolic iron-sulfur (Fe/S) protein assembly machinery. Required for maturation of extramitochondrial Fe/S proteins. This chain is Probable cytosolic Fe-S cluster assembly factor v1g210509, found in Nematostella vectensis (Starlet sea anemone).